Consider the following 56-residue polypeptide: Large ribosomal subunit protein bL32 (56 aa).

Positions 1-16 (MAVQKSKKSRAARGMR) are enriched in basic residues. Residues 1 to 22 (MAVQKSKKSRAARGMRRSHDAL) form a disordered region.

It belongs to the bacterial ribosomal protein bL32 family.

This is Large ribosomal subunit protein bL32 from Photobacterium profundum (strain SS9).